A 98-amino-acid chain; its full sequence is Integration host factor subunit beta (98 aa).

Belongs to the bacterial histone-like protein family. As to quaternary structure, heterodimer of an alpha and a beta chain.

Functionally, this protein is one of the two subunits of integration host factor, a specific DNA-binding protein that functions in genetic recombination as well as in transcriptional and translational control. The polypeptide is Integration host factor subunit beta (Hahella chejuensis (strain KCTC 2396)).